The chain runs to 242 residues: Putative S-adenosyl-L-methionine-dependent methyltransferase Mmcs_0580 (242 aa).

Residues aspartate 104 and 134–135 (DL) each bind S-adenosyl-L-methionine.

This sequence belongs to the UPF0677 family.

Its function is as follows. Exhibits S-adenosyl-L-methionine-dependent methyltransferase activity. The sequence is that of Putative S-adenosyl-L-methionine-dependent methyltransferase Mmcs_0580 from Mycobacterium sp. (strain MCS).